A 1836-amino-acid chain; its full sequence is U3 small nucleolar RNA-associated protein 10 (1836 aa).

Residues 245 to 283 form an HEAT 1 repeat; that stretch reads EVVGFLLLPSKYETLRNIDVDTRLTAYSIIAVLASIIPI. The tract at residues 453-473 is disordered; the sequence is SNSSVRDSDDVEFDAGEEDNN. Acidic residues predominate over residues 461-473; sequence DDVEFDAGEEDNN. 2 HEAT repeats span residues 585–623 and 813–850; these read PLDLYLLIPIFLLGVYDETRVVRAGFVQLLRFIKETTTS and VENRIKIVNKLIDLLNNDEPIESDPMDTLQTLKLDQDL. A disordered region spans residues 863–883; that stretch reads QIPEQGPAKRRRRSSSSTKQA. A run of 2 helical transmembrane segments spans residues 998-1018 and 1085-1105; these read LLLVIAELASLAPEIVLHSVM and LFTYLIRTLGSDLSLHVLLFL. 3 HEAT repeats span residues 1333–1372, 1749–1787, and 1790–1828; these read ESVLEKLLPVLLHGIKKNVDIELEQAYLDTFAIIVNKFGA, ETLVHGLIKYISNEKEDNSSSTKIWTIRALKSIFQKMGE, and LTYLPTLIPYIAELLEDDDQAVEMEVRSGLVRVIENVLG.

It belongs to the HEATR1/UTP10 family. In terms of assembly, component of the ribosomal small subunit (SSU) processome.

The protein resides in the nucleus. It localises to the nucleolus. Its subcellular location is the membrane. In terms of biological role, involved in nucleolar processing of pre-18S ribosomal RNA. Involved in ribosome biosynthesis. The protein is U3 small nucleolar RNA-associated protein 10 of Scheffersomyces stipitis (strain ATCC 58785 / CBS 6054 / NBRC 10063 / NRRL Y-11545) (Yeast).